The sequence spans 128 residues: Calcitonin gene-related peptide 1 (128 aa).

Positions 1-25 are cleaved as a signal peptide; that stretch reads MGFLKFSPFLVVSILLLYQACSLQA. A propeptide spanning residues 26–80 is cleaved from the precursor; it reads VPLRSILESSPGMATLSEEEVRLLAALVQDYMQMKARELEQEEEQEAEGSSVTAQ. Cysteine 84 and cysteine 89 form a disulfide bridge. Phenylalanine 119 carries the post-translational modification Phenylalanine amide. A propeptide spanning residues 125 to 128 is cleaved from the precursor; the sequence is DLQA.

This sequence belongs to the calcitonin family. Detected in nerve cells of cerebrum, hippocampus and pons/midbrain in newborns, and only in nerve cells of pons/midbrain in adult.

The protein resides in the secreted. Functionally, CGRP1/CALCA is a peptide hormone that induces vasodilation mediated by the CALCRL-RAMP1 receptor complex. Dilates a variety of vessels including the coronary, cerebral and systemic vasculature. Its abundance in the CNS also points toward a neurotransmitter or neuromodulator role. It also elevates platelet cAMP. CGRP1 can also bind and activate CALCR-RAMP1 (AMYR1) receptor complex. This chain is Calcitonin gene-related peptide 1, found in Mus musculus (Mouse).